The chain runs to 106 residues: 3-oxoacyl-[acyl-carrier-protein] reductase (106 aa).

This sequence belongs to the short-chain dehydrogenases/reductases (SDR) family. As to quaternary structure, homotetramer. In terms of tissue distribution, mesocarp.

It localises to the plastid. The protein resides in the chloroplast. The enzyme catalyses a (3R)-hydroxyacyl-[ACP] + NADP(+) = a 3-oxoacyl-[ACP] + NADPH + H(+). Its pathway is lipid metabolism; fatty acid biosynthesis. This chain is 3-oxoacyl-[acyl-carrier-protein] reductase, found in Persea americana (Avocado).